The following is a 1287-amino-acid chain: DNA-directed RNA polymerase subunit beta (1287 aa).

This sequence belongs to the RNA polymerase beta chain family. The RNAP catalytic core consists of 2 alpha, 1 beta, 1 beta' and 1 omega subunit. When a sigma factor is associated with the core the holoenzyme is formed, which can initiate transcription.

It carries out the reaction RNA(n) + a ribonucleoside 5'-triphosphate = RNA(n+1) + diphosphate. Its function is as follows. DNA-dependent RNA polymerase catalyzes the transcription of DNA into RNA using the four ribonucleoside triphosphates as substrates. The sequence is that of DNA-directed RNA polymerase subunit beta from Salinibacter ruber (strain DSM 13855 / M31).